We begin with the raw amino-acid sequence, 420 residues long: UDP-N-acetylglucosamine 1-carboxyvinyltransferase (420 aa).

Lys22–Asn23 serves as a coordination point for phosphoenolpyruvate. Arg93 is a binding site for UDP-N-acetyl-alpha-D-glucosamine. Cys117 acts as the Proton donor in catalysis. The residue at position 117 (Cys117) is a 2-(S-cysteinyl)pyruvic acid O-phosphothioketal. Residues Lys162–Val165, Asp307, and Ile329 each bind UDP-N-acetyl-alpha-D-glucosamine.

The protein belongs to the EPSP synthase family. MurA subfamily.

It localises to the cytoplasm. It catalyses the reaction phosphoenolpyruvate + UDP-N-acetyl-alpha-D-glucosamine = UDP-N-acetyl-3-O-(1-carboxyvinyl)-alpha-D-glucosamine + phosphate. Its pathway is cell wall biogenesis; peptidoglycan biosynthesis. Functionally, cell wall formation. Adds enolpyruvyl to UDP-N-acetylglucosamine. The chain is UDP-N-acetylglucosamine 1-carboxyvinyltransferase from Actinobacillus succinogenes (strain ATCC 55618 / DSM 22257 / CCUG 43843 / 130Z).